A 166-amino-acid chain; its full sequence is MKFFEIGEIVKSHGLKGRMKAKSYVENGEDLSSVHEAMIVKGKEEPRGYKVRKIVLHKTYFFLELETIDTVESADSLVGSTVLIPEDDRAALSGDEYYWRDLMGLQVVTEEGRFLGRIESIFPTGSNDVYVCAGGSREILLPAISDVILKIDLDKKEMVVRLLPGL.

In terms of domain architecture, PRC barrel spans 94-166; that stretch reads GDEYYWRDLM…EMVVRLLPGL (73 aa).

It belongs to the RimM family. In terms of assembly, binds ribosomal protein uS19.

Its subcellular location is the cytoplasm. In terms of biological role, an accessory protein needed during the final step in the assembly of 30S ribosomal subunit, possibly for assembly of the head region. Essential for efficient processing of 16S rRNA. May be needed both before and after RbfA during the maturation of 16S rRNA. It has affinity for free ribosomal 30S subunits but not for 70S ribosomes. This chain is Ribosome maturation factor RimM, found in Syntrophus aciditrophicus (strain SB).